We begin with the raw amino-acid sequence, 123 residues long: Large ribosomal subunit protein uL29 (123 aa).

Lys-19 bears the N6-acetyllysine mark. A Glycyl lysine isopeptide (Lys-Gly) (interchain with G-Cter in SUMO2) cross-link involves residue Lys-25. Ser-29 carries the post-translational modification Phosphoserine. Lys-43 is modified (N6-acetyllysine). Positions 95–114 (LNKHEENLKTKKQQRKERLY) are disordered.

The protein belongs to the universal ribosomal protein uL29 family. As to quaternary structure, component of the large ribosomal subunit.

The protein resides in the cytoplasm. Functionally, component of the large ribosomal subunit. The ribosome is a large ribonucleoprotein complex responsible for the synthesis of proteins in the cell. The protein is Large ribosomal subunit protein uL29 (RPL35) of Bos taurus (Bovine).